A 204-amino-acid chain; its full sequence is Probable nicotinate-nucleotide adenylyltransferase (204 aa).

Belongs to the NadD family.

The enzyme catalyses nicotinate beta-D-ribonucleotide + ATP + H(+) = deamido-NAD(+) + diphosphate. It participates in cofactor biosynthesis; NAD(+) biosynthesis; deamido-NAD(+) from nicotinate D-ribonucleotide: step 1/1. Catalyzes the reversible adenylation of nicotinate mononucleotide (NaMN) to nicotinic acid adenine dinucleotide (NaAD). This chain is Probable nicotinate-nucleotide adenylyltransferase, found in Mycolicibacterium gilvum (strain PYR-GCK) (Mycobacterium gilvum (strain PYR-GCK)).